A 209-amino-acid polypeptide reads, in one-letter code: Ribosomal RNA large subunit methyltransferase E (209 aa).

Residues glycine 63, tryptophan 65, aspartate 83, aspartate 99, and aspartate 124 each contribute to the S-adenosyl-L-methionine site. Lysine 164 functions as the Proton acceptor in the catalytic mechanism.

The protein belongs to the class I-like SAM-binding methyltransferase superfamily. RNA methyltransferase RlmE family.

It localises to the cytoplasm. It catalyses the reaction uridine(2552) in 23S rRNA + S-adenosyl-L-methionine = 2'-O-methyluridine(2552) in 23S rRNA + S-adenosyl-L-homocysteine + H(+). In terms of biological role, specifically methylates the uridine in position 2552 of 23S rRNA at the 2'-O position of the ribose in the fully assembled 50S ribosomal subunit. This is Ribosomal RNA large subunit methyltransferase E from Yersinia pseudotuberculosis serotype O:1b (strain IP 31758).